The following is a 199-amino-acid chain: Molybdenum cofactor guanylyltransferase (199 aa).

GTP contacts are provided by residues 12–14 (LAG), Lys25, Asn53, Asp71, and Asp101. Asp101 is a Mg(2+) binding site.

Belongs to the MobA family. As to quaternary structure, monomer. Mg(2+) is required as a cofactor.

The protein resides in the cytoplasm. The catalysed reaction is Mo-molybdopterin + GTP + H(+) = Mo-molybdopterin guanine dinucleotide + diphosphate. Functionally, transfers a GMP moiety from GTP to Mo-molybdopterin (Mo-MPT) cofactor (Moco or molybdenum cofactor) to form Mo-molybdopterin guanine dinucleotide (Mo-MGD) cofactor. The chain is Molybdenum cofactor guanylyltransferase from Cupriavidus taiwanensis (strain DSM 17343 / BCRC 17206 / CCUG 44338 / CIP 107171 / LMG 19424 / R1) (Ralstonia taiwanensis (strain LMG 19424)).